A 297-amino-acid polypeptide reads, in one-letter code: Farnesyl diphosphate synthase (297 aa).

Isopentenyl diphosphate-binding residues include lysine 47, arginine 50, and histidine 79. 2 residues coordinate Mg(2+): aspartate 86 and aspartate 92. Position 97 (arginine 97) interacts with (2E)-geranyl diphosphate. Residue arginine 98 participates in isopentenyl diphosphate binding. Positions 183, 184, 221, and 238 each coordinate (2E)-geranyl diphosphate.

The protein belongs to the FPP/GGPP synthase family. Requires Mg(2+) as cofactor.

It localises to the cytoplasm. It carries out the reaction isopentenyl diphosphate + (2E)-geranyl diphosphate = (2E,6E)-farnesyl diphosphate + diphosphate. The protein is Farnesyl diphosphate synthase of Geobacillus stearothermophilus (Bacillus stearothermophilus).